We begin with the raw amino-acid sequence, 543 residues long: Ribosomal protein arginine N-methyltransferase rmt3 (543 aa).

Residues 58–81 form a C2H2-type zinc finger; the sequence is FCCLFCDSTFTCLKDLWSHCKEAH. The SAM-dependent MTase PRMT-type domain maps to 217–543; sequence DSYYFESYAG…KADSQSYVLN (327 aa). S-adenosyl-L-homocysteine is bound by residues R239, G263, D285, S287, I313, and E314. Active-site residues include E329 and E338.

The protein belongs to the class I-like SAM-binding methyltransferase superfamily. Protein arginine N-methyltransferase family. As to quaternary structure, interacts with ef1a-c, rps2 and rps24. Note=Associates with the 40S ribosomal particle.

Its subcellular location is the cytoplasm. The protein resides in the cytosol. It carries out the reaction L-arginyl-[protein] + S-adenosyl-L-methionine = N(omega)-methyl-L-arginyl-[protein] + S-adenosyl-L-homocysteine + H(+). It catalyses the reaction L-arginyl-[protein] + 2 S-adenosyl-L-methionine = N(omega),N(omega)-dimethyl-L-arginyl-[protein] + 2 S-adenosyl-L-homocysteine + 2 H(+). In terms of biological role, methylates (mono and asymmetric dimethylation) the guanidino nitrogens of arginyl residues in ribosomal protein rps2. This Schizosaccharomyces pombe (strain 972 / ATCC 24843) (Fission yeast) protein is Ribosomal protein arginine N-methyltransferase rmt3 (rmt3).